We begin with the raw amino-acid sequence, 155 residues long: Protein SprT-like (155 aa).

One can recognise a SprT-like domain in the interval 7–145 (QRHMEEVSLQ…GSCGGKLIQT (139 aa)). His67 serves as a coordination point for Zn(2+). Residue Glu68 is part of the active site. Position 71 (His71) interacts with Zn(2+).

Belongs to the SprT family. It depends on Zn(2+) as a cofactor.

The protein resides in the cytoplasm. The chain is Protein SprT-like from Listeria monocytogenes serotype 4b (strain CLIP80459).